A 314-amino-acid chain; its full sequence is tRNA pseudouridine synthase B (314 aa).

Residue aspartate 47 is the Nucleophile of the active site.

Belongs to the pseudouridine synthase TruB family. Type 1 subfamily.

The enzyme catalyses uridine(55) in tRNA = pseudouridine(55) in tRNA. In terms of biological role, responsible for synthesis of pseudouridine from uracil-55 in the psi GC loop of transfer RNAs. The protein is tRNA pseudouridine synthase B of Vibrio parahaemolyticus serotype O3:K6 (strain RIMD 2210633).